The following is a 168-amino-acid chain: Ribosome maturation factor RimM (168 aa).

One can recognise a PRC barrel domain in the interval 94 to 167; it reads DGNYYHHQII…KVIIELLDGL (74 aa).

It belongs to the RimM family. Binds ribosomal protein uS19.

It is found in the cytoplasm. Functionally, an accessory protein needed during the final step in the assembly of 30S ribosomal subunit, possibly for assembly of the head region. Essential for efficient processing of 16S rRNA. May be needed both before and after RbfA during the maturation of 16S rRNA. It has affinity for free ribosomal 30S subunits but not for 70S ribosomes. The chain is Ribosome maturation factor RimM from Ligilactobacillus salivarius (strain UCC118) (Lactobacillus salivarius).